The sequence spans 213 residues: Ras-related protein Rab-25 (213 aa).

GTP contacts are provided by Ser-21, Gly-24, Lys-25, Thr-26, Asn-27, Ser-38, His-39, Thr-43, and Thr-44. Thr-26 contacts Mg(2+). 2 short sequence motifs (switch) span residues 35–49 and 67–84; these read NEFS…GVEF and DTAG…YYRG. The Mg(2+) site is built by Thr-44 and Asp-67. The GTP site is built by Gly-70, Asn-125, Lys-126, Asp-128, Ala-156, and Leu-157. 2 S-geranylgeranyl cysteine lipidation sites follow: Cys-209 and Cys-210. Cys-210 is modified (cysteine methyl ester). Residues 211–213 constitute a propeptide, removed in mature form; it reads ISL.

The protein belongs to the small GTPase superfamily. Rab family. In terms of assembly, interacts (GTP-bound form) with RAB11FIP1, RAB11FIP2, RAB11FIP3 and RAB11FIP4. Interacts (via the hypervariable C-terminal region) with ITGB1 (via the cytoplasmic region); the interaction is GTP-dependent. Interacts with ITGAV. Associates with the integrin alpha-V/beta-1 heterodimer. Interacts with VPS33B. Mg(2+) is required as a cofactor.

The protein localises to the cell membrane. Its subcellular location is the cell projection. It is found in the pseudopodium membrane. The protein resides in the cytoplasmic vesicle. The enzyme catalyses GTP + H2O = GDP + phosphate + H(+). With respect to regulation, regulated by guanine nucleotide exchange factors (GEFs) which promote the exchange of bound GDP for free GTP. Regulated by GTPase activating proteins (GAPs) which increase the GTP hydrolysis activity. Inhibited by GDP dissociation inhibitors (GDIs) which prevent Rab-GDP dissociation. Functionally, the small GTPases Rab are key regulators of intracellular membrane trafficking, from the formation of transport vesicles to their fusion with membranes. Rabs cycle between an inactive GDP-bound form and an active GTP-bound form that is able to recruit to membranes different set of downstream effectors directly responsible for vesicle formation, movement, tethering and fusion. RAB25 regulates epithelial cell differentiation, proliferation and survival, thereby playing key roles in tumorigenesis. Promotes invasive migration of cells in which it functions to localize and maintain integrin alpha-V/beta-1 at the tips of extending pseudopodia. Involved in the regulation of epithelial morphogenesis through the control of CLDN4 expression and localization at tight junctions. May selectively regulate the apical recycling pathway. Together with MYO5B regulates transcytosis. This Canis lupus familiaris (Dog) protein is Ras-related protein Rab-25 (RAB25).